Consider the following 353-residue polypeptide: Photosystem II D2 protein (353 aa).

Threonine 2 carries the post-translational modification N-acetylthreonine. At threonine 2 the chain carries Phosphothreonine. A helical transmembrane segment spans residues cysteine 41–threonine 61. Histidine 118 lines the chlorophyll a pocket. A helical membrane pass occupies residues glycine 125–proline 141. Glutamine 130 and asparagine 143 together coordinate pheophytin a. The helical transmembrane segment at valine 153–serine 166 threads the bilayer. Residue histidine 198 coordinates chlorophyll a. The chain crosses the membrane as a helical span at residues alanine 208 to aspartate 228. Histidine 215 and phenylalanine 262 together coordinate a plastoquinone. Histidine 215 contacts Fe cation. Histidine 269 is a binding site for Fe cation. Residues glycine 279–arginine 295 form a helical membrane-spanning segment.

The protein belongs to the reaction center PufL/M/PsbA/D family. In terms of assembly, PSII is composed of 1 copy each of membrane proteins PsbA, PsbB, PsbC, PsbD, PsbE, PsbF, PsbH, PsbI, PsbJ, PsbK, PsbL, PsbM, PsbT, PsbX, PsbY, PsbZ, Psb30/Ycf12, at least 3 peripheral proteins of the oxygen-evolving complex and a large number of cofactors. It forms dimeric complexes. The cofactor is The D1/D2 heterodimer binds P680, chlorophylls that are the primary electron donor of PSII, and subsequent electron acceptors. It shares a non-heme iron and each subunit binds pheophytin, quinone, additional chlorophylls, carotenoids and lipids. There is also a Cl(-1) ion associated with D1 and D2, which is required for oxygen evolution. The PSII complex binds additional chlorophylls, carotenoids and specific lipids..

It localises to the plastid. The protein localises to the chloroplast thylakoid membrane. It catalyses the reaction 2 a plastoquinone + 4 hnu + 2 H2O = 2 a plastoquinol + O2. In terms of biological role, photosystem II (PSII) is a light-driven water:plastoquinone oxidoreductase that uses light energy to abstract electrons from H(2)O, generating O(2) and a proton gradient subsequently used for ATP formation. It consists of a core antenna complex that captures photons, and an electron transfer chain that converts photonic excitation into a charge separation. The D1/D2 (PsbA/PsbD) reaction center heterodimer binds P680, the primary electron donor of PSII as well as several subsequent electron acceptors. D2 is needed for assembly of a stable PSII complex. This chain is Photosystem II D2 protein, found in Agrostis stolonifera (Creeping bentgrass).